Consider the following 158-residue polypeptide: 2-C-methyl-D-erythritol 2,4-cyclodiphosphate synthase (158 aa).

2 residues coordinate a divalent metal cation: Asp-8 and His-10. 4-CDP-2-C-methyl-D-erythritol 2-phosphate-binding positions include 8–10 (DSH) and 34–35 (HS). His-42 contacts a divalent metal cation. 4-CDP-2-C-methyl-D-erythritol 2-phosphate is bound by residues 56-58 (DIG), 61-65 (FPDND), and Arg-142.

Belongs to the IspF family. In terms of assembly, homotrimer. The cofactor is a divalent metal cation.

The enzyme catalyses 4-CDP-2-C-methyl-D-erythritol 2-phosphate = 2-C-methyl-D-erythritol 2,4-cyclic diphosphate + CMP. It functions in the pathway isoprenoid biosynthesis; isopentenyl diphosphate biosynthesis via DXP pathway; isopentenyl diphosphate from 1-deoxy-D-xylulose 5-phosphate: step 4/6. Involved in the biosynthesis of isopentenyl diphosphate (IPP) and dimethylallyl diphosphate (DMAPP), two major building blocks of isoprenoid compounds. Catalyzes the conversion of 4-diphosphocytidyl-2-C-methyl-D-erythritol 2-phosphate (CDP-ME2P) to 2-C-methyl-D-erythritol 2,4-cyclodiphosphate (ME-CPP) with a corresponding release of cytidine 5-monophosphate (CMP). This Brachyspira hyodysenteriae (strain ATCC 49526 / WA1) protein is 2-C-methyl-D-erythritol 2,4-cyclodiphosphate synthase.